Reading from the N-terminus, the 369-residue chain is Protein VP6 (369 aa).

A disordered region spans residues 20–208 (LEQRSIAPLL…EEAKVGGGDR (189 aa)). Over residues 29–66 (LREKNSTEAKSKLKEDGEKKNKSEKEENKIHDDRRVES) the composition is skewed to basic and acidic residues. Composition is skewed to gly residues over residues 92 to 111 (TGGG…GGVG) and 162 to 171 (TSGGLQGRGG). Over residues 196 to 208 (TEGEEAKVGGGDR) the composition is skewed to basic and acidic residues.

The protein belongs to the orbivirus VP6 family.

The protein resides in the virion. This African horse sickness virus 3 (AHSV-3) protein is Protein VP6 (S9).